Here is an 83-residue protein sequence, read N- to C-terminus: Cytochrome b559 subunit alpha (83 aa).

The chain crosses the membrane as a helical span at residues 21–35 (VIHSITIPSLFIAGW). Histidine 23 contributes to the heme binding site.

It belongs to the PsbE/PsbF family. As to quaternary structure, heterodimer of an alpha subunit and a beta subunit. PSII is composed of 1 copy each of membrane proteins PsbA, PsbB, PsbC, PsbD, PsbE, PsbF, PsbH, PsbI, PsbJ, PsbK, PsbL, PsbM, PsbT, PsbX, PsbY, PsbZ, Psb30/Ycf12, at least 3 peripheral proteins of the oxygen-evolving complex and a large number of cofactors. It forms dimeric complexes. Requires heme b as cofactor.

It localises to the plastid membrane. Its function is as follows. This b-type cytochrome is tightly associated with the reaction center of photosystem II (PSII). PSII is a light-driven water:plastoquinone oxidoreductase that uses light energy to abstract electrons from H(2)O, generating O(2) and a proton gradient subsequently used for ATP formation. It consists of a core antenna complex that captures photons, and an electron transfer chain that converts photonic excitation into a charge separation. In Cuscuta reflexa (Southern Asian dodder), this protein is Cytochrome b559 subunit alpha.